Reading from the N-terminus, the 117-residue chain is LIM and senescent cell antigen-like-containing domain protein 3 (117 aa).

In terms of domain architecture, LIM zinc-binding spans 70 to 117 (ATCERCKGGFAPAETIVNSNGELYHEQCFVCAQCFQQFPEGLFYEERT).

As to expression, detected in testis.

It localises to the cytoplasm. This is LIM and senescent cell antigen-like-containing domain protein 3 (LIMS3) from Homo sapiens (Human).